Reading from the N-terminus, the 385-residue chain is 8-amino-7-oxononanoate synthase (385 aa).

Arg23 provides a ligand contact to substrate. Residue 110 to 111 (GF) participates in pyridoxal 5'-phosphate binding. Residue His135 participates in substrate binding. Pyridoxal 5'-phosphate-binding residues include Ser180, His208, and Thr234. Lys237 carries the N6-(pyridoxal phosphate)lysine modification. Thr350 is a substrate binding site.

The protein belongs to the class-II pyridoxal-phosphate-dependent aminotransferase family. BioF subfamily. In terms of assembly, homodimer. It depends on pyridoxal 5'-phosphate as a cofactor.

It carries out the reaction 6-carboxyhexanoyl-[ACP] + L-alanine + H(+) = (8S)-8-amino-7-oxononanoate + holo-[ACP] + CO2. The protein operates within cofactor biosynthesis; biotin biosynthesis. Its function is as follows. Catalyzes the decarboxylative condensation of pimeloyl-[acyl-carrier protein] and L-alanine to produce 8-amino-7-oxononanoate (AON), [acyl-carrier protein], and carbon dioxide. This chain is 8-amino-7-oxononanoate synthase, found in Vibrio vulnificus (strain YJ016).